The primary structure comprises 27 residues: Cupiennin-3a (27 aa).

Residue Glu27 is modified to Glutamic acid 1-amide.

Expressed by the venom gland.

Its subcellular location is the secreted. The chain is Cupiennin-3a from Cupiennius salei (American wandering spider).